Consider the following 768-residue polypeptide: UPF0313 protein VV1_2212 (768 aa).

One can recognise a Radical SAM core domain in the interval 363–640 (AYDMIKTSVN…LHKALLRYHD (278 aa)). [4Fe-4S] cluster is bound by residues Cys-377, Cys-381, and Cys-384. Positions 674–768 (DARTPAQRRK…GGRNQPSRAR (95 aa)) are disordered. Residues 679–689 (AQRRKSGRHGA) are compositionally biased toward basic residues. Residues 719–731 (GGQSNSAPSRSGS) are compositionally biased toward polar residues.

The protein belongs to the UPF0313 family. It depends on [4Fe-4S] cluster as a cofactor.

In Vibrio vulnificus (strain CMCP6), this protein is UPF0313 protein VV1_2212.